Consider the following 325-residue polypeptide: Coiled-coil domain-containing protein 160 (325 aa).

2 disordered regions span residues 18–45 and 81–123; these read SAQD…KGME and ENKR…CSTD. The segment covering 81-91 has biased composition (basic and acidic residues); it reads ENKRNISKNET. A compositionally biased stretch (polar residues) spans 92 to 123; that stretch reads DTNSASYESSNVDVTTEESFNSTEDNSTCSTD. The stretch at 144 to 288 forms a coiled coil; that stretch reads KLCLNLLNEE…SVIKNELRTE (145 aa).

It belongs to the CCDC160 family.

This is Coiled-coil domain-containing protein 160 (CCDC160) from Homo sapiens (Human).